The following is a 38-amino-acid chain: Large ribosomal subunit protein bL36 (38 aa).

This sequence belongs to the bacterial ribosomal protein bL36 family.

This chain is Large ribosomal subunit protein bL36, found in Psychrobacter cryohalolentis (strain ATCC BAA-1226 / DSM 17306 / VKM B-2378 / K5).